Reading from the N-terminus, the 139-residue chain is D-ribose pyranase (139 aa).

Residue H20 is the Proton donor of the active site. Substrate contacts are provided by residues D28, H106, and Y128–N130.

Belongs to the RbsD / FucU family. RbsD subfamily. In terms of assembly, homodecamer.

Its subcellular location is the cytoplasm. The catalysed reaction is beta-D-ribopyranose = beta-D-ribofuranose. It functions in the pathway carbohydrate metabolism; D-ribose degradation; D-ribose 5-phosphate from beta-D-ribopyranose: step 1/2. Functionally, catalyzes the interconversion of beta-pyran and beta-furan forms of D-ribose. The protein is D-ribose pyranase of Salmonella arizonae (strain ATCC BAA-731 / CDC346-86 / RSK2980).